A 259-amino-acid chain; its full sequence is 5'-nucleotidase SurE (259 aa).

Positions 8, 9, 40, and 92 each coordinate a divalent metal cation.

The protein belongs to the SurE nucleotidase family. A divalent metal cation serves as cofactor.

It localises to the cytoplasm. It carries out the reaction a ribonucleoside 5'-phosphate + H2O = a ribonucleoside + phosphate. Its function is as follows. Nucleotidase that shows phosphatase activity on nucleoside 5'-monophosphates. The protein is 5'-nucleotidase SurE of Xanthomonas axonopodis pv. citri (strain 306).